Consider the following 108-residue polypeptide: Anthranilate 1,2-dioxygenase ferredoxin subunit (108 aa).

The region spanning 9–105 (WHPLGAIDEF…IRIVDGQVEV (97 aa)) is the Rieske domain. Residues cysteine 49, histidine 51, cysteine 68, and histidine 71 each coordinate [2Fe-2S] cluster.

This sequence belongs to the bacterial ring-hydroxylating dioxygenase ferredoxin component family. In terms of assembly, part of a multicomponent enzyme system composed of a reductase (AndAa), a ferredoxin (AndAb) and a two-subunit oxygenase component (AndAc and AndAd). Requires [2Fe-2S] cluster as cofactor.

The protein operates within aromatic compound metabolism; anthranilate degradation via hydroxylation; catechol from anthranilate: step 1/1. In terms of biological role, part of the multicomponent anthranilate dioxygenase, that converts anthranilate to catechol. This protein seems to be a 2Fe-2S ferredoxin. The protein is Anthranilate 1,2-dioxygenase ferredoxin subunit of Burkholderia cepacia (Pseudomonas cepacia).